Consider the following 318-residue polypeptide: HPr kinase/phosphorylase (318 aa).

Residues His143 and Lys164 contribute to the active site. Position 158 to 165 (158 to 165 (GKSGVGKS)) interacts with ATP. Ser165 lines the Mg(2+) pocket. Asp182 (proton acceptor; for phosphorylation activity. Proton donor; for dephosphorylation activity) is an active-site residue. Positions 206-215 (MEIRGLGILN) are important for the catalytic mechanism of both phosphorylation and dephosphorylation. Glu207 contacts Mg(2+). Residue Arg248 is part of the active site. Positions 269 to 274 (PVKPGR) are important for the catalytic mechanism of dephosphorylation.

The protein belongs to the HPrK/P family. Homohexamer. It depends on Mg(2+) as a cofactor.

It catalyses the reaction [HPr protein]-L-serine + ATP = [HPr protein]-O-phospho-L-serine + ADP + H(+). The catalysed reaction is [HPr protein]-O-phospho-L-serine + phosphate + H(+) = [HPr protein]-L-serine + diphosphate. Catalyzes the ATP- as well as the pyrophosphate-dependent phosphorylation of a specific serine residue in HPr, a phosphocarrier protein of the phosphoenolpyruvate-dependent sugar phosphotransferase system (PTS). HprK/P also catalyzes the pyrophosphate-producing, inorganic phosphate-dependent dephosphorylation (phosphorolysis) of seryl-phosphorylated HPr (P-Ser-HPr). The polypeptide is HPr kinase/phosphorylase (Leptospira borgpetersenii serovar Hardjo-bovis (strain L550)).